Consider the following 244-residue polypeptide: MKSLFEQFEIDLYCIIITRFFDVSITTITVYLGLLMVIVIGMYKVSLYKATLIGNNNWQHIGEMIYEFVVDLILEQVGKPGILFFPFIMSLFLFVLTLNVMGLIPLSFTVTGQLLVTFTLAITIMIGITIWGFRIHGIKFLNIFVPSGIEPWLLPLLVFIEIMSYVLRPISLAVRLFANMLAGHLLIHIIGVAAIYLMQFYFIGILPWICVIAFMFLELGIAFLQAYVFVLLTLIYIANIINLH.

A run of 7 helical transmembrane segments spans residues 20–40 (FFDVSITTITVYLGLLMVIVI), 81–101 (GILFFPFIMSLFLFVLTLNVM), 113–133 (QLLVTFTLAITIMIGITIWGF), 140–160 (FLNIFVPSGIEPWLLPLLVFI), 176–196 (LFANMLAGHLLIHIIGVAAIY), 202–222 (FIGILPWICVIAFMFLELGIA), and 223–243 (FLQAYVFVLLTLIYIANIINL).

This sequence belongs to the ATPase A chain family. In terms of assembly, F-type ATPases have 2 components, CF(1) - the catalytic core - and CF(0) - the membrane proton channel. CF(1) has five subunits: alpha(3), beta(3), gamma(1), delta(1), epsilon(1). CF(0) has three main subunits: a, b and c.

It is found in the mitochondrion inner membrane. Mitochondrial membrane ATP synthase (F(1)F(0) ATP synthase or Complex V) produces ATP from ADP in the presence of a proton gradient across the membrane which is generated by electron transport complexes of the respiratory chain. F-type ATPases consist of two structural domains, F(1) - containing the extramembraneous catalytic core and F(0) - containing the membrane proton channel, linked together by a central stalk and a peripheral stalk. During catalysis, ATP synthesis in the catalytic domain of F(1) is coupled via a rotary mechanism of the central stalk subunits to proton translocation. Key component of the proton channel; it may play a direct role in the translocation of protons across the membrane. This chain is ATP synthase subunit a (atp6), found in Dictyostelium citrinum (Slime mold).